The primary structure comprises 250 residues: 26 kDa periplasmic immunogenic protein (250 aa).

The N-terminal stretch at 1 to 28 (MNTRASNFLAASFSTIMLVGAFSLPAFA) is a signal peptide.

It is found in the periplasm. The chain is 26 kDa periplasmic immunogenic protein (bp26) from Brucella abortus (strain S19).